The following is a 496-amino-acid chain: Flotillin-like protein 3 (496 aa).

C37 carries the S-palmitoyl cysteine lipid modification. Residues 301–328 (VVREAELQLEVERKNALRLTEKLKAEKL) adopt a coiled-coil conformation.

It belongs to the band 7/mec-2 family. Flotillin subfamily. May be palmitoylated.

The protein resides in the cell membrane. It localises to the membrane. The protein localises to the caveola. May act as a scaffolding protein within caveolar membranes, functionally participating in formation of caveolae or caveolae-like vesicles. The chain is Flotillin-like protein 3 (FLOT3) from Oryza sativa subsp. japonica (Rice).